The sequence spans 159 residues: Endoribonuclease YbeY (159 aa).

The Zn(2+) site is built by His122, His126, and His132.

It belongs to the endoribonuclease YbeY family. It depends on Zn(2+) as a cofactor.

Its subcellular location is the cytoplasm. Single strand-specific metallo-endoribonuclease involved in late-stage 70S ribosome quality control and in maturation of the 3' terminus of the 16S rRNA. The polypeptide is Endoribonuclease YbeY (Roseiflexus castenholzii (strain DSM 13941 / HLO8)).